We begin with the raw amino-acid sequence, 209 residues long: GTP-binding protein RHO1 (209 aa).

N-acetylserine is present on Ser2. 17–24 provides a ligand contact to GTP; that stretch reads GDGACGKT. Residues 39–47 carry the Effector region motif; sequence YVPTVFENY. GTP is bound by residues 64-68 and 122-125; these read DTAGQ and CKVD. A disordered region spans residues 187–209; sequence KSKTNGKAKKNTTEKKKKKCVLL. A compositionally biased stretch (basic residues) spans 190 to 209; that stretch reads TNGKAKKNTTEKKKKKCVLL. Cys206 is subject to Cysteine methyl ester. The S-geranylgeranyl cysteine moiety is linked to residue Cys206. A propeptide spans 207 to 209 (removed in mature form); the sequence is VLL.

Belongs to the small GTPase superfamily. Rho family. In terms of assembly, interacts with BEM4; the interaction is direct. Interacts with SEC3; the interaction is direct. Interacts with the GAP BAG7. Interacts with the GAP LRG1. Interacts with the GAP SAC7. Interacts with the GAP RDI1. Interacts with the 1,3-beta-glucan synthase component FKS1. Interacts with the protein kinase PKC1. Interacts with the G protein beta subunit STE4. Interacts with SKN7. Interacts with TUS1. Interacts with BNI1.

The protein localises to the cell membrane. The protein resides in the endosome membrane. Its subcellular location is the peroxisome membrane. It carries out the reaction GTP + H2O = GDP + phosphate + H(+). With respect to regulation, alternates between an inactive form bound to GDP and an active form bound to GTP. Activated by the guanine nucleotide-exchange factors (GEFs) ROM1, ROM2 and TUS1, and inactivated by GTPase-activating proteins (GAPs) BAG7, BEM2, LRG1, and SAC7, and the Rho GDP-dissociation inhibitor RDI1. The different GAPs regulate RHO1 in a target-specific manner. Its function is as follows. Acts as a central regulator in the cell wall integrity signaling pathway, which is regulated by the cell cycle and in response to various types of cell wall stress. Integrates signals from different cell surface sensors, and activates a set of effectors, regulating processes including beta-glucan synthesis at the site of wall remodeling, gene expression related to cell wall biogenesis, organization of the actin cytoskeleton, and protein- and secretory vesicle-targeting to the growth site. Activates the protein kinase C (PKC1) MAP kinase cascade, the beta-1,3-glucan synthase (FKS1), the formin BNI1, the exocyst component SEC3 and the transcription factor SKN7. This is GTP-binding protein RHO1 (RHO1) from Saccharomyces cerevisiae (strain ATCC 204508 / S288c) (Baker's yeast).